We begin with the raw amino-acid sequence, 821 residues long: Enhancer of polycomb-like protein 1 (821 aa).

The span at 1 to 12 shows a compositional bias: polar residues; that stretch reads MSSNGGSNTNER. Disordered regions lie at residues 1 to 43, 427 to 485, and 779 to 799; these read MSSN…TRFR, KAAA…QPAM, and QFLQ…PINP. 2 stretches are compositionally biased toward low complexity: residues 18–39 and 449–465; these read SGSL…DSGS and EQAA…SSSQ. Polar residues predominate over residues 786 to 799; the sequence is ENGSPNNATMPINP.

The protein belongs to the enhancer of polycomb family. In terms of assembly, component of the NuA4 histone acetyltransferase complex.

It localises to the nucleus. Component of the NuA4 histone acetyltransferase complex which is involved in transcriptional activation of selected genes principally by acetylation of nucleosomal histone H4 and H2A. The NuA4 complex is also involved in DNA repair. Involved in gene silencing by neighboring heterochromatin, blockage of the silencing spreading along the chromosome, and required for cell cycle progression through G2/M. This Candida glabrata (strain ATCC 2001 / BCRC 20586 / JCM 3761 / NBRC 0622 / NRRL Y-65 / CBS 138) (Yeast) protein is Enhancer of polycomb-like protein 1 (EPL1).